A 182-amino-acid polypeptide reads, in one-letter code: MQFNIPTLLTLFRVILIPFLVVVFYLPFAWAPMVSALIFCIAAITDWFDGFLARRWNQSTRFGAFLDPVADKVLVAIAMVLVTEHYHSWWVTLPAATMIAREIIISALREWMAELGKRSSVAVSWIGKVKTTAQMVALAWLLWRPNIWVEYAGIALFFVAAVLTLWSMLQYLSAARGDLLDQ.

Over Gln2 to Phe12 the chain is Cytoplasmic. A helical transmembrane segment spans residues Arg13–Leu37. Residues Ile38 to Thr60 are Periplasmic-facing. A helical membrane pass occupies residues Arg61–Leu81. The Cytoplasmic portion of the chain corresponds to Val82–Tyr86. Residues His87–Ala107 traverse the membrane as a helical segment. The Periplasmic segment spans residues Leu108–Pro145. The helical transmembrane segment at Asn146–Met168 threads the bilayer. Residues Leu169–Asp181 are Cytoplasmic-facing.

Belongs to the CDP-alcohol phosphatidyltransferase class-I family.

It localises to the cell inner membrane. The enzyme catalyses a CDP-1,2-diacyl-sn-glycerol + sn-glycerol 3-phosphate = a 1,2-diacyl-sn-glycero-3-phospho-(1'-sn-glycero-3'-phosphate) + CMP + H(+). It functions in the pathway phospholipid metabolism; phosphatidylglycerol biosynthesis; phosphatidylglycerol from CDP-diacylglycerol: step 1/2. In terms of biological role, catalyzes the conversion of cytidine diphosphate diacylglycerol (CDP-DG) and glycerol 3-phosphate into phosphatidylglycerol. Essential for the synthesis of anionic phospholipids, thereby playing a role in balancing the ratio of zwitterionic and anionic phospholipids, which is thought to be important for normal membrane function. The chain is CDP-diacylglycerol--glycerol-3-phosphate 3-phosphatidyltransferase from Salmonella choleraesuis (strain SC-B67).